A 200-amino-acid polypeptide reads, in one-letter code: uncharacterized protein (200 aa).

The helical transmembrane segment at 7–29 threads the bilayer; it reads FFFLFSFISHAMMLTGLIGSSSF.

The protein localises to the membrane. This is an uncharacterized protein from Saccharomyces cerevisiae (strain ATCC 204508 / S288c) (Baker's yeast).